The primary structure comprises 471 residues: Argininosuccinate lyase (471 aa).

The protein belongs to the lyase 1 family. Argininosuccinate lyase subfamily.

It localises to the cytoplasm. It catalyses the reaction 2-(N(omega)-L-arginino)succinate = fumarate + L-arginine. It functions in the pathway amino-acid biosynthesis; L-arginine biosynthesis; L-arginine from L-ornithine and carbamoyl phosphate: step 3/3. The protein is Argininosuccinate lyase of Renibacterium salmoninarum (strain ATCC 33209 / DSM 20767 / JCM 11484 / NBRC 15589 / NCIMB 2235).